The following is a 487-amino-acid chain: Diacylglycerol kinase 4 (487 aa).

The region spanning 86–242 (TPEVPLMVFV…LDSWNILITM (157 aa)) is the DAGKc domain.

Belongs to the eukaryotic diacylglycerol kinase family. In terms of assembly, monomer. Highly expressed in pollen grains. Expressed in roots, hypocotyls, leaf vasculature, developing anthers and stigmas, and receptacles of siliques.

The protein localises to the endoplasmic reticulum. It is found in the cytoplasm. Its subcellular location is the cytosol. It catalyses the reaction a 1,2-diacyl-sn-glycerol + ATP = a 1,2-diacyl-sn-glycero-3-phosphate + ADP + H(+). Its function is as follows. Phosphorylates the second messenger diacylglycerol (DAG) to generate phosphatidic acid (PA), another important signaling molecule. PA is required for plant development and responses to abiotic stress and pathogen attack. May be involved in the accumulation of PA during cold stress. Involved in the regulation of PA and phosphatidylcholine biosynthesis in growing pollen tubes. Required for nitric oxide-dependent pollen tube growth and re-orientation responses. Functions together with DGK2 in male gametophyte development and biosynthesis of phosphatidylglycerol and phosphatidylinositol in the endoplasmic reticulum (ER). Involved in PA production for pollen grain growth, as well as leaf and root growth. Possesses guanylyl cyclase activity in vitro. The sequence is that of Diacylglycerol kinase 4 from Arabidopsis thaliana (Mouse-ear cress).